Here is a 134-residue protein sequence, read N- to C-terminus: ATP synthase epsilon chain (134 aa).

The protein belongs to the ATPase epsilon chain family. In terms of assembly, F-type ATPases have 2 components, CF(1) - the catalytic core - and CF(0) - the membrane proton channel. CF(1) has five subunits: alpha(3), beta(3), gamma(1), delta(1), epsilon(1). CF(0) has three main subunits: a, b and c.

The protein localises to the cell membrane. Functionally, produces ATP from ADP in the presence of a proton gradient across the membrane. This is ATP synthase epsilon chain from Carboxydothermus hydrogenoformans (strain ATCC BAA-161 / DSM 6008 / Z-2901).